Reading from the N-terminus, the 464-residue chain is Divalent metal cation transporter MntH (464 aa).

Helical transmembrane passes span 57 to 77 (ILIA…AGGA), 82 to 102 (SLLS…SMAA), 125 to 145 (GIIL…AEII), 157 to 177 (IPLV…LLLM), 186 to 206 (AIVA…VFLA), 229 to 249 (MLYL…LYLG), 281 to 301 (LTIA…LFFG), 321 to 341 (IVGA…LLSS), 376 to 396 (LLSV…EAKI), 399 to 419 (LLTL…VPLV), and 443 to 463 (VATV…VGVI).

This sequence belongs to the NRAMP family.

It localises to the cell membrane. In terms of biological role, h(+)-stimulated, divalent metal cation uptake system. This chain is Divalent metal cation transporter MntH, found in Levilactobacillus brevis (Lactobacillus brevis).